A 711-amino-acid polypeptide reads, in one-letter code: Polyribonucleotide nucleotidyltransferase (711 aa).

Mg(2+)-binding residues include aspartate 486 and aspartate 492. The KH domain occupies 553–612; sequence PRIHTIKINPDKIKDVIGKGGSVIRALTEETGTTIEIEDDGTVKIAATDGEKAKHAIRRI. The S1 motif domain occupies 622-690; it reads GRIYNGKVTR…RQGRVRLSIK (69 aa). Positions 690-711 are disordered; that stretch reads KEATEQSQPAAAPEAPAAEQGE. Residues 694 to 711 are compositionally biased toward low complexity; that stretch reads EQSQPAAAPEAPAAEQGE.

Belongs to the polyribonucleotide nucleotidyltransferase family. Component of the RNA degradosome, which is a multiprotein complex involved in RNA processing and mRNA degradation. The cofactor is Mg(2+).

The protein localises to the cytoplasm. It carries out the reaction RNA(n+1) + phosphate = RNA(n) + a ribonucleoside 5'-diphosphate. Functionally, involved in mRNA degradation. Catalyzes the phosphorolysis of single-stranded polyribonucleotides processively in the 3'- to 5'-direction. This Citrobacter koseri (strain ATCC BAA-895 / CDC 4225-83 / SGSC4696) protein is Polyribonucleotide nucleotidyltransferase.